Reading from the N-terminus, the 398-residue chain is Nicotinate phosphoribosyltransferase (398 aa).

A Phosphohistidine; by autocatalysis modification is found at His-221.

The protein belongs to the NAPRTase family. Transiently phosphorylated on a His residue during the reaction cycle. Phosphorylation strongly increases the affinity for substrates and increases the rate of nicotinate D-ribonucleotide production. Dephosphorylation regenerates the low-affinity form of the enzyme, leading to product release.

The catalysed reaction is nicotinate + 5-phospho-alpha-D-ribose 1-diphosphate + ATP + H2O = nicotinate beta-D-ribonucleotide + ADP + phosphate + diphosphate. It functions in the pathway cofactor biosynthesis; NAD(+) biosynthesis; nicotinate D-ribonucleotide from nicotinate: step 1/1. Catalyzes the synthesis of beta-nicotinate D-ribonucleotide from nicotinate and 5-phospho-D-ribose 1-phosphate at the expense of ATP. The chain is Nicotinate phosphoribosyltransferase from Buchnera aphidicola subsp. Schizaphis graminum (strain Sg).